The following is a 1203-amino-acid chain: ATP-dependent helicase/nuclease subunit A (1203 aa).

One can recognise a UvrD-like helicase ATP-binding domain in the interval 4–472 (VKLTPEQNEA…IRLKENFRSR (469 aa)). 25–32 (ASAGSGKT) provides a ligand contact to ATP. Residues 503-785 (VQGNITDYPV…RVMTFHKSKG (283 aa)) enclose the UvrD-like helicase C-terminal domain.

Belongs to the helicase family. AddA subfamily. In terms of assembly, heterodimer of AddA and AddB/RexB. Mg(2+) serves as cofactor.

The enzyme catalyses Couples ATP hydrolysis with the unwinding of duplex DNA by translocating in the 3'-5' direction.. It catalyses the reaction ATP + H2O = ADP + phosphate + H(+). Its function is as follows. The heterodimer acts as both an ATP-dependent DNA helicase and an ATP-dependent, dual-direction single-stranded exonuclease. Recognizes the chi site generating a DNA molecule suitable for the initiation of homologous recombination. The AddA nuclease domain is required for chi fragment generation; this subunit has the helicase and 3' -&gt; 5' nuclease activities. The sequence is that of ATP-dependent helicase/nuclease subunit A from Lactococcus lactis subsp. lactis (strain IL1403) (Streptococcus lactis).